The following is a 656-amino-acid chain: MTKPLLEVSACYRSFQAGEQQLTVLKDINLSIARGEMVAIVGASGSGKSTLMNILGCLDKPSKGAYFIDGQDTSQMDVDELAKLRREHFGFIFQRYHLLGDLNAVGNVEVPAVYAGKDRLERRDRAESLLSRLGLGERLDHKPNQLSGGQQQRVSVARALMNGGDVILADEPTGALDSHSGEEMMRLLQELHREGHTIIIVTHDMHVAQHADRIIEIKDGVIISDEPNLASQTAVKAQVDMSLAKPSGATRVAAWDRYAEALKMALLAMSTHRLRTFLTMLGIIIGIASVVSVVALGEGSQREILKSISSMGTNTIDIRPGLGFGDRRSARVRTLTASDANALKNLPYVDSVTPSISSSVTVRLGNKAVTASVNGVGPEFFRVRGYELAQGQFWDDDSVDALAQDAVIDDNTRKQLFPDSTGAMGSVIGQVIFLGDLPVRIIGVTKPKESAFGNSDALNVWVPYTTVSGRMVGKKYLDGITVRLDESVPSNAAEQGIITLLKMRHGTQDFFTINTDTIRQNIEKTTATMTLLISAIAVISLVVGGIGVMNIMLVSVTERTREIGVRMAVGARQSDILRQFLIEAVLVCLCGGALGVALAYLIGVVFAQAGGSFQMIYSTTSIVAAFACSTLIGVLFGFLPARNAARLDPVEALARE.

Residues 6–244 (LEVSACYRSF…VKAQVDMSLA (239 aa)) form the ABC transporter domain. Residue 42-49 (GASGSGKS) participates in ATP binding. 4 helical membrane-spanning segments follow: residues 277–297 (FLTM…VALG), 531–551 (LLIS…VMNI), 586–606 (LVCL…GVVF), and 621–641 (SIVA…FLPA).

This sequence belongs to the ABC transporter superfamily. Macrolide exporter (TC 3.A.1.122) family. As to quaternary structure, homodimer. Part of the tripartite efflux system MacAB-TolC, which is composed of an inner membrane transporter, MacB, a periplasmic membrane fusion protein, MacA, and an outer membrane component, TolC. The complex forms a large protein conduit and can translocate molecules across both the inner and outer membranes. Interacts with MacA.

The protein resides in the cell inner membrane. Its function is as follows. Part of the tripartite efflux system MacAB-TolC. MacB is a non-canonical ABC transporter that contains transmembrane domains (TMD), which form a pore in the inner membrane, and an ATP-binding domain (NBD), which is responsible for energy generation. Confers resistance against macrolides. In Shewanella oneidensis (strain ATCC 700550 / JCM 31522 / CIP 106686 / LMG 19005 / NCIMB 14063 / MR-1), this protein is Macrolide export ATP-binding/permease protein MacB.